The sequence spans 461 residues: ATP synthase subunit beta (461 aa).

149 to 156 (GGAGVGKT) serves as a coordination point for ATP.

It belongs to the ATPase alpha/beta chains family. As to quaternary structure, F-type ATPases have 2 components, CF(1) - the catalytic core - and CF(0) - the membrane proton channel. CF(1) has five subunits: alpha(3), beta(3), gamma(1), delta(1), epsilon(1). CF(0) has three main subunits: a(1), b(2) and c(9-12). The alpha and beta chains form an alternating ring which encloses part of the gamma chain. CF(1) is attached to CF(0) by a central stalk formed by the gamma and epsilon chains, while a peripheral stalk is formed by the delta and b chains.

The protein resides in the cell membrane. It catalyses the reaction ATP + H2O + 4 H(+)(in) = ADP + phosphate + 5 H(+)(out). Produces ATP from ADP in the presence of a proton gradient across the membrane. The catalytic sites are hosted primarily by the beta subunits. In Caldanaerobacter subterraneus subsp. tengcongensis (strain DSM 15242 / JCM 11007 / NBRC 100824 / MB4) (Thermoanaerobacter tengcongensis), this protein is ATP synthase subunit beta.